The sequence spans 186 residues: dTTP/UTP pyrophosphatase (186 aa).

Asp70 (proton acceptor) is an active-site residue.

This sequence belongs to the Maf family. YhdE subfamily. A divalent metal cation serves as cofactor.

The protein resides in the cytoplasm. The catalysed reaction is dTTP + H2O = dTMP + diphosphate + H(+). It carries out the reaction UTP + H2O = UMP + diphosphate + H(+). Its function is as follows. Nucleoside triphosphate pyrophosphatase that hydrolyzes dTTP and UTP. May have a dual role in cell division arrest and in preventing the incorporation of modified nucleotides into cellular nucleic acids. This is dTTP/UTP pyrophosphatase from Vibrio vulnificus (strain CMCP6).